The following is an 88-amino-acid chain: UPF0297 protein Cphy_2298 (88 aa).

It belongs to the UPF0297 family.

The protein is UPF0297 protein Cphy_2298 of Lachnoclostridium phytofermentans (strain ATCC 700394 / DSM 18823 / ISDg) (Clostridium phytofermentans).